We begin with the raw amino-acid sequence, 210 residues long: Prolactin (210 aa).

The N-terminal stretch at 1-23 (MARRSQGTKLHLAVLCLVVSCHA) is a signal peptide. 2 cysteine pairs are disulfide-bonded: Cys-69–Cys-183 and Cys-200–Cys-210.

It belongs to the somatotropin/prolactin family. In terms of tissue distribution, pituitary gland.

It is found in the secreted. This Coregonus autumnalis (Arctic cisco) protein is Prolactin (prl).